The sequence spans 229 residues: Large ribosomal subunit protein uL1 (229 aa).

It belongs to the universal ribosomal protein uL1 family. In terms of assembly, part of the 50S ribosomal subunit.

Its function is as follows. Binds directly to 23S rRNA. The L1 stalk is quite mobile in the ribosome, and is involved in E site tRNA release. Protein L1 is also a translational repressor protein, it controls the translation of the L11 operon by binding to its mRNA. In Streptococcus suis (strain 98HAH33), this protein is Large ribosomal subunit protein uL1.